Consider the following 318-residue polypeptide: DNA repair nuclease/redox regulator APEX1 (318 aa).

Residues 1-33 (MPKRGKKGAVAEDGDELKTEPEAKKSKTTAKKN) form a necessary for interaction with YBX1, binding to RNA, association together with NPM1 to rRNA, endoribonuclease activity on abasic RNA and localization in the nucleoli region. A disordered region spans residues 1–60 (MPKRGKKGAVAEDGDELKTEPEAKKSKTTAKKNDKEAAGEGPALYEDPPDQKTSPSGKPA). Lysine 6 and lysine 7 each carry N6-acetyllysine; by EP300. The Nuclear localization signal (NLS) motif lies at 8 to 13 (GAVAED). A compositionally biased stretch (basic and acidic residues) spans 16 to 38 (ELKTEPEAKKSKTTAKKNDKEAA). The necessary for interaction with NPM1 and for efficient rRNA binding stretch occupies residues 23–33 (AKKSKTTAKKN). N6-acetyllysine occurs at positions 27, 31, 32, and 35. Serine 54 is modified (phosphoserine). The Nuclear export signal (NES) signature appears at 64 to 80 (ICSWNVDGLRAWIKKKG). Residue cysteine 65 is modified to S-nitrosocysteine; alternate. A disulfide bridge connects residues cysteine 65 and cysteine 93. Aspartate 70 contributes to the Mg(2+) binding site. Cysteine 93 is modified (S-nitrosocysteine; alternate). Glutamate 96 contributes to the Mg(2+) binding site. The active site involves tyrosine 171. Lysine 197 bears the N6-acetyllysine mark. Positions 210 and 212 each coordinate Mg(2+). Aspartate 210 functions as the Proton donor/acceptor in the catalytic mechanism. Residue threonine 233 is modified to Phosphothreonine; by CDK5. A mitochondrial targeting sequence (MTS) region spans residues 289–318 (HSLLTALCDSKIRSKALGSDHCPITLYLAL). Aspartate 308 contacts Mg(2+). Cysteine 310 is subject to S-nitrosocysteine.

It belongs to the DNA repair enzymes AP/ExoA family. Monomer. Homodimer; disulfide-linked. Component of the SET complex, composed of at least APEX1, SET, ANP32A, HMGB2, NME1 and TREX1. Associates with the dimer XRCC5/XRCC6 in a DNA-dependent manner. Interacts with SIRT1; the interaction is increased in the context of genotoxic stress. Interacts with HDAC1, HDAC2 and HDAC3; the interactions are not dependent on the APEX1 acetylation status. Interacts with XRCC1; the interaction is induced by SIRT1 and increased with the APEX1 acetylated form. Interacts with NPM1 (via N-terminal domain); the interaction is RNA-dependent and decreases in hydrogen peroxide-damaged cells. Interacts (via N-terminus) with YBX1 (via C-terminus); the interaction is increased in presence of APEX1 acetylated at Lys-6 and Lys-7. Interacts with HNRNPL; the interaction is DNA-dependent. Interacts (via N-terminus) with KPNA1 and KPNA2. Interacts with TXN; the interaction stimulates the FOS/JUN AP-1 complex DNA-binding activity in a redox-dependent manner. Interacts with GZMA, KRT8, MDM2, POLB, PRDX6, PRPF19, RPLP0, TOMM20 and WDR77. Binds to CDK5. Requires Mg(2+) as cofactor. It depends on Mn(2+) as a cofactor. In terms of processing, phosphorylated. Phosphorylation by kinase PKC or casein kinase CK2 results in enhanced redox activity that stimulates binding of the FOS/JUN AP-1 complex to its cognate binding site. AP-endodeoxyribonuclease activity is not affected by CK2-mediated phosphorylation. Phosphorylation of Thr-233 by CDK5 in response to MPP(+)/MPTP (1-methyl-4-phenylpyridinium) reduces AP-endodeoxyribonuclease activity resulting in accumulation of DNA damage and contributing to neuronal death. Acetylated on Lys-6 and Lys-7. Acetylation is increased by the transcriptional coactivator EP300 acetyltransferase, genotoxic agents like H(2)O(2) and methyl methanesulfonate (MMS). Acetylation increases its binding affinity to the negative calcium response element (nCaRE) DNA promoter. The acetylated form induces a stronger binding of YBX1 to the Y-box sequence in the MDR1 promoter than the unacetylated form. Deacetylated on lysines. Lys-6 and Lys-7 are deacetylated by SIRT1. Post-translationally, cleaved at Lys-31 by granzyme A to create the mitochondrial form; leading in reduction of binding to DNA, AP endodeoxyribonuclease activity, redox activation of transcription factors and to enhanced cell death. Cleaved by granzyme K; leading to intracellular ROS accumulation and enhanced cell death after oxidative stress. In terms of processing, cys-69 and Cys-93 are nitrosylated in response to nitric oxide (NO) and lead to the exposure of the nuclear export signal (NES). Ubiquitinated by MDM2; leading to translocation to the cytoplasm and proteasomal degradation.

It localises to the nucleus. Its subcellular location is the nucleolus. It is found in the nucleus speckle. The protein resides in the endoplasmic reticulum. The protein localises to the cytoplasm. It localises to the mitochondrion. It carries out the reaction a deoxyribonucleotide-2'-deoxyribose-5'-monophosphate-DNA + H2O = a 5'-end 2'-deoxyribose-5'-monophosphate-DNA + a 3'-end 2'-deoxyribonucleotide-DNA + H(+). The catalysed reaction is Exonucleolytic cleavage in the 3'- to 5'-direction to yield nucleoside 5'-phosphates.. The enzyme catalyses a 3'-end 2'-deoxyribonucleotide-3'-phosphoglycolate-DNA + H2O = 2-phosphoglycolate + a 3'-end 2'-deoxyribonucleotide-DNA + H(+). It catalyses the reaction a 3'-end 2'-deoxyribonucleotide-8-oxoguanine-DNA + H2O = 8-oxo-dGMP + a 3'-end 2'-deoxyribonucleotide-DNA + H(+). With respect to regulation, NPM1 stimulates endodeoxyribonuclease activity on double-stranded DNA with AP sites, but inhibits endoribonuclease activity on single-stranded RNA containing AP sites. Functionally, multifunctional protein that plays a central role in the cellular response to oxidative stress. The two major activities of APEX1 are DNA repair and redox regulation of transcriptional factors. Functions as an apurinic/apyrimidinic (AP) endodeoxyribonuclease in the base excision repair (BER) pathway of DNA lesions induced by oxidative and alkylating agents. Initiates repair of AP sites in DNA by catalyzing hydrolytic incision of the phosphodiester backbone immediately adjacent to the damage, generating a single-strand break with 5'-deoxyribose phosphate and 3'-hydroxyl ends. Also incises at AP sites in the DNA strand of DNA/RNA hybrids, single-stranded DNA regions of R-loop structures, and single-stranded RNA molecules. Operates at switch sites of immunoglobulin (Ig) constant regions where it mediates Ig isotype class switch recombination. Processes AP sites induced by successive action of AICDA and UNG. Generates staggered nicks in opposite DNA strands resulting in the formation of double-strand DNA breaks that are finally resolved via non-homologous end joining repair pathway. Has 3'-5' exodeoxyribonuclease activity on mismatched deoxyribonucleotides at the 3' termini of nicked or gapped DNA molecules during short-patch BER. Possesses DNA 3' phosphodiesterase activity capable of removing lesions (such as phosphoglycolate and 8-oxoguanine) blocking the 3' side of DNA strand breaks. Also acts as an endoribonuclease involved in the control of single-stranded RNA metabolism. Plays a role in regulating MYC mRNA turnover by preferentially cleaving in between UA and CA dinucleotides of the MYC coding region determinant (CRD). In association with NMD1, plays a role in the rRNA quality control process during cell cycle progression. Acts as a loading factor for POLB onto non-incised AP sites in DNA and stimulates the 5'-terminal deoxyribose 5'-phosphate (dRp) excision activity of POLB. Exerts reversible nuclear redox activity to regulate DNA binding affinity and transcriptional activity of transcriptional factors by controlling the redox status of their DNA-binding domain, such as the FOS/JUN AP-1 complex after exposure to IR. Involved in calcium-dependent down-regulation of parathyroid hormone (PTH) expression by binding to negative calcium response elements (nCaREs). Together with HNRNPL or the dimer XRCC5/XRCC6, associates with nCaRE, acting as an activator of transcriptional repression. May also play a role in the epigenetic regulation of gene expression by participating in DNA demethylation. Stimulates the YBX1-mediated MDR1 promoter activity, when acetylated at Lys-6 and Lys-7, leading to drug resistance. Plays a role in protection from granzyme-mediated cellular repair leading to cell death. Binds DNA and RNA. Associates, together with YBX1, on the MDR1 promoter. Together with NPM1, associates with rRNA. The protein is DNA repair nuclease/redox regulator APEX1 (APEX1) of Pongo pygmaeus (Bornean orangutan).